Consider the following 366-residue polypeptide: Chorismate synthase (366 aa).

Residues Arg48 and Arg54 each contribute to the NADP(+) site. FMN-binding positions include 125–127 (RSS), 238–239 (NA), Gly278, 293–297 (KPTSS), and Arg319.

The protein belongs to the chorismate synthase family. In terms of assembly, homotetramer. It depends on FMNH2 as a cofactor.

It catalyses the reaction 5-O-(1-carboxyvinyl)-3-phosphoshikimate = chorismate + phosphate. The protein operates within metabolic intermediate biosynthesis; chorismate biosynthesis; chorismate from D-erythrose 4-phosphate and phosphoenolpyruvate: step 7/7. Functionally, catalyzes the anti-1,4-elimination of the C-3 phosphate and the C-6 proR hydrogen from 5-enolpyruvylshikimate-3-phosphate (EPSP) to yield chorismate, which is the branch point compound that serves as the starting substrate for the three terminal pathways of aromatic amino acid biosynthesis. This reaction introduces a second double bond into the aromatic ring system. The protein is Chorismate synthase of Neisseria gonorrhoeae (strain NCCP11945).